The chain runs to 909 residues: MITKLLTKVIGSRNDRTLRRLRKIVKEINNYEPTFEALSDEELKAKTVEFRERLEQGETLDKLLPEAFATVREASKRVYGMRHFDVQLIGGMVLNGGQIAEMRTGEGKTLTATLPAYLNALPGKGVHVVTVNDYLATRDAETNRPLFEFLGMTVGVNVPNMPPQAKKEAYQADILYGTNNEFGFDYLRDNMAFRNEDRVQRERFFAVVDEVDSILIDEARTPLIISGPAEDSSDLYTRINLLIPQLQKQDKEDSEEYRGDGHYTVDEKSKQVHLTETGQEFVEELMVKNGLMEEGDTLYSPTNISLLHHVNAALRAHVLFERNVDYIVNEDGEVVIVDEHTGRTMPGRRWSEGLHQAVEAKEGVKIQNENQTLASITFQNYFRLYEKLSGMTGTADTEAFEFQSIYGLETVVIPTNKPMIRNDMPDVVYRTEAEKFAAIIEDIKERVEKGQPSLVGTVSIEKSELLSNALKKAKIKHNVLNAKFHEREAEIVAEAGTPGAVTIATNMAGRGTDIVLGGSWQAKVEALQDPTKEQIDAIKAEWKQVHDQVLESGGLHIIGTERHESRRIDNQLRGRSGRQGDAGSSRFYLSMEDSLLRIFTSDRMASLIQSGMEEGEAIESKMLSRSIEKAQRKVEGRNFDIRKQLLEYDDVANDQRKVVYELRDELMSVDDISDMIEQNREDVITAIIDEYIPPQSLEDMWDVEGLQERLKADFDLDAPIKQWLEEDDKLYEEALREKITNLAVEVYKAKEEVVGAQVLRNFEKSVMLQTLDTLWKEHLAAMDHLRQGIHLRGYAQKNPKQEYKRESFELFEGLLEALKTDVITVLSRVRVQQQEEVERMEEQRRAQAEEAARRAQAQHAAAQNPLSEGEESEEGAHQPMVREERKVGRNEPCPCGSGKKYKQCHGKID.

ATP contacts are provided by residues Q87, 105–109 (GEGKT), and D513. A disordered region spans residues 834–909 (QEEVERMEEQ…KYKQCHGKID (76 aa)). The span at 836 to 853 (EVERMEEQRRAQAEEAAR) shows a compositional bias: basic and acidic residues. The span at 854–863 (RAQAQHAAAQ) shows a compositional bias: low complexity. The span at 874 to 889 (EGAHQPMVREERKVGR) shows a compositional bias: basic and acidic residues. Zn(2+) contacts are provided by C893, C895, C904, and H905. Residues 899-909 (KKYKQCHGKID) are compositionally biased toward basic residues.

Belongs to the SecA family. As to quaternary structure, monomer and homodimer. Part of the essential Sec protein translocation apparatus which comprises SecA, SecYEG and auxiliary proteins SecDF-YajC and YidC. It depends on Zn(2+) as a cofactor.

The protein localises to the cell inner membrane. It localises to the cytoplasm. The catalysed reaction is ATP + H2O + cellular proteinSide 1 = ADP + phosphate + cellular proteinSide 2.. In terms of biological role, part of the Sec protein translocase complex. Interacts with the SecYEG preprotein conducting channel. Has a central role in coupling the hydrolysis of ATP to the transfer of proteins into and across the cell membrane, serving both as a receptor for the preprotein-SecB complex and as an ATP-driven molecular motor driving the stepwise translocation of polypeptide chains across the membrane. This chain is Protein translocase subunit SecA, found in Vibrio campbellii (strain ATCC BAA-1116).